The primary structure comprises 447 residues: N-succinylarginine dihydrolase (447 aa).

Residues 19–28, asparagine 110, and 137–138 each bind substrate; these read AGLSFGNEAS and HR. The active site involves glutamate 174. Residue arginine 212 coordinates substrate. Residue histidine 248 is part of the active site. The substrate site is built by aspartate 250 and asparagine 359. The active-site Nucleophile is cysteine 365.

This sequence belongs to the succinylarginine dihydrolase family. Homodimer.

It catalyses the reaction N(2)-succinyl-L-arginine + 2 H2O + 2 H(+) = N(2)-succinyl-L-ornithine + 2 NH4(+) + CO2. It participates in amino-acid degradation; L-arginine degradation via AST pathway; L-glutamate and succinate from L-arginine: step 2/5. In terms of biological role, catalyzes the hydrolysis of N(2)-succinylarginine into N(2)-succinylornithine, ammonia and CO(2). The polypeptide is N-succinylarginine dihydrolase (Salmonella agona (strain SL483)).